Consider the following 484-residue polypeptide: Endoglucanase 9 (484 aa).

A signal peptide spans 1-21; that stretch reads MTSLFFFVLLFSSLLISNGDA. Asp77 serves as the catalytic Nucleophile. Residues His402, Asp453, and Glu462 contribute to the active site.

The protein belongs to the glycosyl hydrolase 9 (cellulase E) family. Specifically expressed in root cap cells.

The protein resides in the secreted. Its subcellular location is the cell wall. The catalysed reaction is Endohydrolysis of (1-&gt;4)-beta-D-glucosidic linkages in cellulose, lichenin and cereal beta-D-glucans.. The sequence is that of Endoglucanase 9 (CEL3) from Arabidopsis thaliana (Mouse-ear cress).